The chain runs to 198 residues: Segregation and condensation protein B (198 aa).

The segment at 168–198 (KLADPATDEPDQNEMDLFFDRFNQSKEQEEE) is disordered.

It belongs to the ScpB family. Homodimer. Homodimerization may be required to stabilize the binding of ScpA to the Smc head domains. Component of a cohesin-like complex composed of ScpA, ScpB and the Smc homodimer, in which ScpA and ScpB bind to the head domain of Smc. The presence of the three proteins is required for the association of the complex with DNA.

The protein localises to the cytoplasm. Functionally, participates in chromosomal partition during cell division. May act via the formation of a condensin-like complex containing Smc and ScpA that pull DNA away from mid-cell into both cell halves. This is Segregation and condensation protein B from Listeria monocytogenes serovar 1/2a (strain ATCC BAA-679 / EGD-e).